Reading from the N-terminus, the 432-residue chain is Glutamyl-tRNA reductase (432 aa).

Substrate-binding positions include 55–58 (TCNR), S114, 119–121 (ETQ), and Q125. C56 functions as the Nucleophile in the catalytic mechanism. NADP(+) is bound at residue 194–199 (GAGEMI).

This sequence belongs to the glutamyl-tRNA reductase family. Homodimer.

The enzyme catalyses (S)-4-amino-5-oxopentanoate + tRNA(Glu) + NADP(+) = L-glutamyl-tRNA(Glu) + NADPH + H(+). Its pathway is porphyrin-containing compound metabolism; protoporphyrin-IX biosynthesis; 5-aminolevulinate from L-glutamyl-tRNA(Glu): step 1/2. In terms of biological role, catalyzes the NADPH-dependent reduction of glutamyl-tRNA(Glu) to glutamate 1-semialdehyde (GSA). The protein is Glutamyl-tRNA reductase of Burkholderia ambifaria (strain MC40-6).